The sequence spans 150 residues: FAD synthase (150 aa).

ATP-binding positions include 11-12, 16-19, D96, and Y124; these read TF and HPGH.

It belongs to the archaeal FAD synthase family. As to quaternary structure, homodimer. A divalent metal cation is required as a cofactor.

The enzyme catalyses FMN + ATP + H(+) = FAD + diphosphate. Its pathway is cofactor biosynthesis; FAD biosynthesis; FAD from FMN: step 1/1. Catalyzes the transfer of the AMP portion of ATP to flavin mononucleotide (FMN) to produce flavin adenine dinucleotide (FAD) coenzyme. This chain is FAD synthase, found in Methanocaldococcus fervens (strain DSM 4213 / JCM 15782 / AG86) (Methanococcus fervens).